A 273-amino-acid chain; its full sequence is MAIKKYKPTSAGRRHMTSADFADITAAKPEKSLVEKLNKSGGRNNAGRITKRHTGGGHKRKYRVIDFRREKKEIPAKIASIEYDPNRSARIALACYADGEKRYILAPLGLKVGDVVIASEQADIKPGNALSIRSIPLGTWVHNIELKIGKGGQLARSAGTYAMIAAKEGKYAQLRLPSGEVRLVLQDCCATVGQVGNVQHENVKIGKAGRNRWLGKRPQSRGVAMNPVDHPHGGGEGKSSGGRHPVTPWGVPTKGYKTRVNKRTDRFIVRRKK.

Residues 213 to 261 (WLGKRPQSRGVAMNPVDHPHGGGEGKSSGGRHPVTPWGVPTKGYKTRVN) form a disordered region.

Belongs to the universal ribosomal protein uL2 family. As to quaternary structure, part of the 50S ribosomal subunit. Forms a bridge to the 30S subunit in the 70S ribosome.

Its function is as follows. One of the primary rRNA binding proteins. Required for association of the 30S and 50S subunits to form the 70S ribosome, for tRNA binding and peptide bond formation. It has been suggested to have peptidyltransferase activity; this is somewhat controversial. Makes several contacts with the 16S rRNA in the 70S ribosome. The chain is Large ribosomal subunit protein uL2 from Syntrophotalea carbinolica (strain DSM 2380 / NBRC 103641 / GraBd1) (Pelobacter carbinolicus).